We begin with the raw amino-acid sequence, 560 residues long: Membrane protein insertase YidC (560 aa).

The helical transmembrane segment at 1–21 threads the bilayer; the sequence is MDIKRTILIAALAVVSYVMVL. Residues 42–66 are disordered; it reads VAPGLPDGVPAGNNGASADVPSANA. 5 helical membrane passes run 341–361, 367–387, 437–457, 468–488, and 515–535; these read LELT…FWLL, LLGN…GLFF, LGGC…YWVL, WMLW…PIIM, and PIIF…YWVV.

The protein belongs to the OXA1/ALB3/YidC family. Type 1 subfamily. In terms of assembly, interacts with the Sec translocase complex via SecD. Specifically interacts with transmembrane segments of nascent integral membrane proteins during membrane integration.

The protein resides in the cell inner membrane. In terms of biological role, required for the insertion and/or proper folding and/or complex formation of integral membrane proteins into the membrane. Involved in integration of membrane proteins that insert both dependently and independently of the Sec translocase complex, as well as at least some lipoproteins. Aids folding of multispanning membrane proteins. This chain is Membrane protein insertase YidC, found in Pseudomonas putida (strain GB-1).